Reading from the N-terminus, the 91-residue chain is Large ribosomal subunit protein bL31B (91 aa).

It belongs to the bacterial ribosomal protein bL31 family. Type B subfamily. Part of the 50S ribosomal subunit.

The protein is Large ribosomal subunit protein bL31B of Neisseria gonorrhoeae (strain ATCC 700825 / FA 1090).